A 470-amino-acid polypeptide reads, in one-letter code: MKNKGKIIQILGPIVDVKFNENQLPKLLNALTIEFEKTKITLEVAQHIGNDVVRTIAMSSTEGLVRNLEVIDTEAPISVPVGKNVLSHMFNVIGENIDNQSIDPNTEKWSIHRKAPSYEEQTATSEILETGIKVIDLLVPYVKGGKIGLFGGAGVGKTVLVQELINNIAVHHGGLSVFAGVGERTREGNDLYYEMKASGVLDKTALVFGQMNEPPGARMRVALSGLTMAEYFRDELNQDVLLFIDNIFRFTQAGSEVSALLGRMPSAVGYQPTLATEMGQLQERITSTRKGSITSIQAVYVPADDLTDPAPATTFIHLDAQTVLDRNIASLGIYPAIDPLASASRMLSADIVGEEHYKIAREVQRILQKFKELQDIIAILGMDELSDEDKNIVYRARKIRNFLSQPFHVAEKFSGIKGTFVKLSDTLRSFRDILDGKYDDLDESAFLYVGTIEEAKQKHLKNYKGDHVEK.

Residue glycine 151–threonine 158 participates in ATP binding.

The protein belongs to the ATPase alpha/beta chains family. F-type ATPases have 2 components, CF(1) - the catalytic core - and CF(0) - the membrane proton channel. CF(1) has five subunits: alpha(3), beta(3), gamma(1), delta(1), epsilon(1). CF(0) has three main subunits: a(1), b(2) and c(9-12). The alpha and beta chains form an alternating ring which encloses part of the gamma chain. CF(1) is attached to CF(0) by a central stalk formed by the gamma and epsilon chains, while a peripheral stalk is formed by the delta and b chains.

Its subcellular location is the cell membrane. The enzyme catalyses ATP + H2O + 4 H(+)(in) = ADP + phosphate + 5 H(+)(out). Produces ATP from ADP in the presence of a proton gradient across the membrane. The catalytic sites are hosted primarily by the beta subunits. This chain is ATP synthase subunit beta, found in Mycoplasma mobile (strain ATCC 43663 / 163K / NCTC 11711) (Mesomycoplasma mobile).